The primary structure comprises 192 residues: Peptidyl-tRNA hydrolase (192 aa).

Y17 contacts tRNA. Catalysis depends on H22, which acts as the Proton acceptor. 3 residues coordinate tRNA: Y68, N70, and N116.

It belongs to the PTH family. Monomer.

The protein resides in the cytoplasm. It carries out the reaction an N-acyl-L-alpha-aminoacyl-tRNA + H2O = an N-acyl-L-amino acid + a tRNA + H(+). In terms of biological role, hydrolyzes ribosome-free peptidyl-tRNAs (with 1 or more amino acids incorporated), which drop off the ribosome during protein synthesis, or as a result of ribosome stalling. Catalyzes the release of premature peptidyl moieties from peptidyl-tRNA molecules trapped in stalled 50S ribosomal subunits, and thus maintains levels of free tRNAs and 50S ribosomes. The protein is Peptidyl-tRNA hydrolase of Mycolicibacterium gilvum (strain PYR-GCK) (Mycobacterium gilvum (strain PYR-GCK)).